Reading from the N-terminus, the 247-residue chain is Ras-like protein family member 11B (247 aa).

Positions 29-247 (ASSRVIKIAV…SAKVRTATSV (219 aa)) are small GTPase-like. GTP contacts are provided by residues 40-47 (GGSGVGKT), 87-91 (DTPGV), and 152-155 (NKAD). Residues 205 to 228 (QNTGTPERRKNSLIPRPKSPNMQD) are disordered.

This sequence belongs to the small GTPase superfamily. Ras family.

It catalyses the reaction GTP + H2O = GDP + phosphate + H(+). The protein is Ras-like protein family member 11B of Xenopus tropicalis (Western clawed frog).